Consider the following 778-residue polypeptide: Endonuclease MutS2 (778 aa).

328–335 (GPNTGGKT) is an ATP binding site. A Smr domain is found at 703-778 (LDLRGKRYEE…GSGCTIANLG (76 aa)).

It belongs to the DNA mismatch repair MutS family. MutS2 subfamily. In terms of assembly, homodimer. Binds to stalled ribosomes, contacting rRNA.

Endonuclease that is involved in the suppression of homologous recombination and thus may have a key role in the control of bacterial genetic diversity. In terms of biological role, acts as a ribosome collision sensor, splitting the ribosome into its 2 subunits. Detects stalled/collided 70S ribosomes which it binds and splits by an ATP-hydrolysis driven conformational change. Acts upstream of the ribosome quality control system (RQC), a ribosome-associated complex that mediates the extraction of incompletely synthesized nascent chains from stalled ribosomes and their subsequent degradation. Probably generates substrates for RQC. This Streptococcus equi subsp. zooepidemicus (strain H70) protein is Endonuclease MutS2.